The chain runs to 323 residues: Methionyl-tRNA formyltransferase (323 aa).

Residue 113–116 participates in (6S)-5,6,7,8-tetrahydrofolate binding; sequence SLLP.

It belongs to the Fmt family.

It carries out the reaction L-methionyl-tRNA(fMet) + (6R)-10-formyltetrahydrofolate = N-formyl-L-methionyl-tRNA(fMet) + (6S)-5,6,7,8-tetrahydrofolate + H(+). In terms of biological role, attaches a formyl group to the free amino group of methionyl-tRNA(fMet). The formyl group appears to play a dual role in the initiator identity of N-formylmethionyl-tRNA by promoting its recognition by IF2 and preventing the misappropriation of this tRNA by the elongation apparatus. The protein is Methionyl-tRNA formyltransferase of Porphyromonas gingivalis (strain ATCC BAA-308 / W83).